Here is a 400-residue protein sequence, read N- to C-terminus: General L-amino acid transport system permease protein AapQ (400 aa).

8 helical membrane passes run 29 to 49, 100 to 120, 142 to 162, 188 to 208, 225 to 245, 264 to 284, 340 to 360, and 367 to 387; these read SIFYQILTIVILVGFVWWVAH, LLVAVTGIFTATIIGFLIGIG, IPPLLVIFFWYLGVLSVLPQP, TGMIAVGIALVIAIVASIIIA, VWTAIALIVGLPLLVFVVSGF, VVGPEFMSLFLALSFYTASFI, NSSLAIAIGFSDLVAVGGTIL, and IEIVCIWGIVYLSLSILTSLF. The region spanning 96-388 is the ABC transmembrane type-1 domain; that stretch reads ILNTLLVAVT…SLSILTSLFM (293 aa).

This sequence belongs to the binding-protein-dependent transport system permease family. HisMQ subfamily.

It is found in the cell inner membrane. Its function is as follows. Part of a binding-protein-dependent transport system for L-amino acids, affects the uptake as well as efflux of these amino acids. Probably responsible for the translocation of the substrate across the membrane. The protein is General L-amino acid transport system permease protein AapQ (aapQ) of Rhizobium johnstonii (strain DSM 114642 / LMG 32736 / 3841) (Rhizobium leguminosarum bv. viciae).